Here is a 291-residue protein sequence, read N- to C-terminus: Nitrogenase iron protein (291 aa).

An ATP-binding site is contributed by 11 to 18 (GKGGIGKS). Position 99 (C99) interacts with [4Fe-4S] cluster. Residue R102 is modified to ADP-ribosylarginine; by dinitrogenase reductase ADP-ribosyltransferase. Residue C133 coordinates [4Fe-4S] cluster.

The protein belongs to the NifH/BchL/ChlL family. Homodimer. It depends on [4Fe-4S] cluster as a cofactor. The reversible ADP-ribosylation of Arg-102 inactivates the nitrogenase reductase and regulates nitrogenase activity.

It carries out the reaction N2 + 8 reduced [2Fe-2S]-[ferredoxin] + 16 ATP + 16 H2O = H2 + 8 oxidized [2Fe-2S]-[ferredoxin] + 2 NH4(+) + 16 ADP + 16 phosphate + 6 H(+). The key enzymatic reactions in nitrogen fixation are catalyzed by the nitrogenase complex, which has 2 components: the iron protein and the molybdenum-iron protein. The sequence is that of Nitrogenase iron protein from Cereibacter sphaeroides (strain ATCC 17023 / DSM 158 / JCM 6121 / CCUG 31486 / LMG 2827 / NBRC 12203 / NCIMB 8253 / ATH 2.4.1.) (Rhodobacter sphaeroides).